Here is a 198-residue protein sequence, read N- to C-terminus: FMN-dependent NADH:quinone oxidoreductase (198 aa).

An FMN-binding site is contributed by 92-95; the sequence is MWNL.

It belongs to the azoreductase type 1 family. As to quaternary structure, homodimer. FMN is required as a cofactor.

The catalysed reaction is 2 a quinone + NADH + H(+) = 2 a 1,4-benzosemiquinone + NAD(+). It catalyses the reaction N,N-dimethyl-1,4-phenylenediamine + anthranilate + 2 NAD(+) = 2-(4-dimethylaminophenyl)diazenylbenzoate + 2 NADH + 2 H(+). Functionally, quinone reductase that provides resistance to thiol-specific stress caused by electrophilic quinones. Also exhibits azoreductase activity. Catalyzes the reductive cleavage of the azo bond in aromatic azo compounds to the corresponding amines. The sequence is that of FMN-dependent NADH:quinone oxidoreductase from Lachnoclostridium phytofermentans (strain ATCC 700394 / DSM 18823 / ISDg) (Clostridium phytofermentans).